We begin with the raw amino-acid sequence, 202 residues long: Heat shock 22 kDa protein, mitochondrial (202 aa).

The N-terminal 31 residues, 1-31, are a transit peptide targeting the mitochondrion; the sequence is MASSLALKRFLSSGLLSSSFLRPVASSASRS. A sHSP domain is found at 94–202; it reads VLSAASRRGW…RNNVINVKVD (109 aa).

It belongs to the small heat shock protein (HSP20) family.

The protein resides in the mitochondrion. The sequence is that of Heat shock 22 kDa protein, mitochondrial (HSP22) from Pisum sativum (Garden pea).